A 692-amino-acid polypeptide reads, in one-letter code: uncharacterized protein (692 aa).

The N-terminal 39 residues, 1–39 (MLRLPSSMPIVSFPANPNLLINPQPSWPSRRGNSAVVVS), are a transit peptide targeting the chloroplast. The Protein kinase domain occupies 189 to 523 (EISPEPVAAA…RLESLLSESL (335 aa)). ATP is bound by residues 195-203 (VAAASLGQV) and K218. D343 (proton acceptor) is an active-site residue.

This sequence belongs to the protein kinase superfamily. ADCK protein kinase family.

Its subcellular location is the plastid. The protein resides in the chloroplast. It localises to the plastoglobule. This is an uncharacterized protein from Arabidopsis thaliana (Mouse-ear cress).